Reading from the N-terminus, the 157-residue chain is Probable succinate transporter subunit YjjB (157 aa).

4 helical membrane-spanning segments follow: residues 6–26, 55–75, 87–107, and 129–149; these read FFMA…GFAM, AGFN…SIGI, VFTV…TAMI, and FLKA…PGLW.

This sequence belongs to the ThrE exporter (TC 2.A.79) family. The transporter is composed of YjjB and YjjP.

The protein resides in the cell inner membrane. Functionally, involved in succinate export with YjjP. Both proteins are required for export. In Salmonella arizonae (strain ATCC BAA-731 / CDC346-86 / RSK2980), this protein is Probable succinate transporter subunit YjjB.